Reading from the N-terminus, the 332-residue chain is Galactosylgalactosylxylosylprotein 3-beta-glucuronosyltransferase 1 (332 aa).

The Cytoplasmic segment spans residues 1-6; that stretch reads MPKRRD. The interval 3-5 is essential for transport from endoplasmic reticulum to Golgi apparatus and interaction with SAR1A; it reads KRR. A helical; Signal-anchor for type II membrane protein transmembrane segment spans residues 7–27; the sequence is ILAIVLIVLPWTLLITVWHQS. Topologically, residues 28–332 are lumenal; the sequence is TLAPLLAVHK…KGFTDPSVEI (305 aa). Residue 91 to 93 participates in UDP-alpha-D-glucuronate binding; sequence PTY. 2 positions are modified to phosphothreonine: threonine 103 and threonine 108. Aspartate 122 is a UDP-alpha-D-glucuronate binding site. Asparagine 140 is a glycosylation site (N-linked (GlcNAc...) asparagine). Residues arginine 165 and arginine 170 each contribute to the UDP-alpha-D-glucuronate site. Asparagine 184 is a glycosylation site (N-linked (GlcNAc...) asparagine). 195 to 197 lines the UDP-alpha-D-glucuronate pocket; it reads DDD. Residue aspartate 197 coordinates Mn(2+). Residues 243-252 form an interaction with galactose moiety of substrate glycoprotein region; the sequence is FDPHRPFAID. The Proton donor/acceptor role is filled by glutamate 282. N-linked (GlcNAc...) asparagine glycosylation occurs at asparagine 301. UDP-alpha-D-glucuronate is bound at residue 309–311; sequence HTR.

Belongs to the glycosyltransferase 43 family. As to quaternary structure, homodimer. Interacts with SAR1A. It depends on Mn(2+) as a cofactor. In terms of processing, the soluble form derives from the membrane form by proteolytic processing.

Its subcellular location is the golgi apparatus membrane. It localises to the secreted. It catalyses the reaction 3-O-(beta-D-galactosyl-(1-&gt;3)-beta-D-galactosyl-(1-&gt;4)-beta-D-xylosyl)-L-seryl-[protein] + UDP-alpha-D-glucuronate = 3-O-(beta-D-GlcA-(1-&gt;3)-beta-D-Gal-(1-&gt;3)-beta-D-Gal-(1-&gt;4)-beta-D-Xyl)-L-seryl-[protein] + UDP + H(+). It functions in the pathway protein modification; protein glycosylation. Functionally, involved in the biosynthesis of L2/HNK-1 carbohydrate epitope on glycoproteins. Can also play a role in glycosaminoglycan biosynthesis. Substrates include asialo-orosomucoid (ASOR), asialo-fetuin, and asialo-neural cell adhesion molecule. Requires sphingomyelin for activity: stearoyl-sphingomyelin was the most effective, followed by palmitoyl-sphingomyelin and lignoceroyl-sphingomyelin. Activity was demonstrated only for sphingomyelin with a saturated fatty acid and not for that with an unsaturated fatty acid, regardless of the length of the acyl group. This is Galactosylgalactosylxylosylprotein 3-beta-glucuronosyltransferase 1 from Pan troglodytes (Chimpanzee).